Reading from the N-terminus, the 38-residue chain is Large ribosomal subunit protein bL36 (38 aa).

Belongs to the bacterial ribosomal protein bL36 family.

The polypeptide is Large ribosomal subunit protein bL36 (Gemmatimonas aurantiaca (strain DSM 14586 / JCM 11422 / NBRC 100505 / T-27)).